We begin with the raw amino-acid sequence, 461 residues long: Coronin-1A (461 aa).

N-acetylserine is present on S2. Position 2 is a phosphoserine; by PKC (S2). WD repeat units lie at residues H13–P63, N73–E110, P123–D160, G164–E204, K207–D251, P258–E296, and P302–A349. The segment covering N407–T418 has biased composition (basic and acidic residues). Positions N407–S431 are disordered. S412 is subject to Phosphoserine; by PKC. Position 418 is a phosphothreonine (T418). Polar residues predominate over residues E420 to V430. A Phosphoserine modification is found at S422. The stretch at L425 to K461 forms a coiled coil.

It belongs to the WD repeat coronin family. Binds actin. Phosphorylation at Ser-412 by PKC strongly down-regulates the association with actin. Post-translationally, polyubiquitinated by RNF128 with 'Lys-48'-linked chains, leading to proteasomal degradation.

The protein resides in the cytoplasm. It is found in the cytoskeleton. The protein localises to the cell cortex. Its subcellular location is the cytoplasmic vesicle. It localises to the phagosome membrane. In terms of biological role, may be a crucial component of the cytoskeleton of highly motile cells, functioning both in the invagination of large pieces of plasma membrane, as well as in forming protrusions of the plasma membrane involved in cell locomotion. The sequence is that of Coronin-1A (Coro1a) from Rattus norvegicus (Rat).